Reading from the N-terminus, the 161-residue chain is Allophycocyanin alpha chain 2 (161 aa).

N71 carries the post-translational modification N4-methylasparagine. (2R,3E)-phycocyanobilin is bound at residue C81.

Belongs to the phycobiliprotein family. In terms of assembly, component of the phycobilisome. Heterodimer of an alpha and a beta chain. Contains one covalently linked bilin chromophore.

It localises to the cellular thylakoid membrane. In terms of biological role, light-harvesting photosynthetic bile pigment-protein from the phycobiliprotein complex. Allophycocyanin has a maximum absorption at approximately 650 nanometers. The chain is Allophycocyanin alpha chain 2 (apcA2) from Microchaete diplosiphon (Fremyella diplosiphon).